The following is a 140-amino-acid chain: Putative pre-16S rRNA nuclease (140 aa).

This sequence belongs to the YqgF nuclease family.

The protein localises to the cytoplasm. Could be a nuclease involved in processing of the 5'-end of pre-16S rRNA. This chain is Putative pre-16S rRNA nuclease, found in Enterococcus faecalis (strain ATCC 700802 / V583).